A 435-amino-acid chain; its full sequence is GTPase Der (435 aa).

2 EngA-type G domains span residues 4–167 and 175–350; these read PTLA…PSED and IKFS…ENQT. Residues 10-17, 57-61, 119-122, 181-188, 228-232, and 293-296 contribute to the GTP site; these read GRPNVGKS, DTGGI, NKVD, DTAGI, and NKWD. The KH-like domain occupies 351-435; the sequence is RRIQSSVLND…PIHIIARKRK (85 aa).

It belongs to the TRAFAC class TrmE-Era-EngA-EngB-Septin-like GTPase superfamily. EngA (Der) GTPase family. As to quaternary structure, associates with the 50S ribosomal subunit.

Functionally, GTPase that plays an essential role in the late steps of ribosome biogenesis. The polypeptide is GTPase Der (Lacticaseibacillus casei (strain BL23) (Lactobacillus casei)).